The chain runs to 86 residues: Anti-adapter protein IraP (86 aa).

Residues 1–36 (MKNLIAELLLKLAQKEEESKELVAQVEALEIIVTAM) adopt a coiled-coil conformation.

It belongs to the IraP family. Interacts with RssB.

It localises to the cytoplasm. In terms of biological role, inhibits RpoS proteolysis by regulating RssB activity, thereby increasing the stability of the sigma stress factor RpoS especially during phosphate and magnesium starvation, but also in stationary phase and during nitrogen starvation. Its effect on RpoS stability is due to its interaction with RssB, which probably blocks the interaction of RssB with RpoS, and the consequent delivery of the RssB-RpoS complex to the ClpXP protein degradation pathway. In Salmonella choleraesuis (strain SC-B67), this protein is Anti-adapter protein IraP.